The primary structure comprises 211 residues: MTPWLGLVVLLGSWSLGDWGAEACTCSPSHPQDAFCNSDIVIRAKVVGKKLLKEGPFGTMVYTIKQMKMYRGFTKMPHVQYIHTEASESLCGLKLEVNKYQYLLTGRVYDGKMYTGLCNFVERWDQLTLSQRKGLNYRYHLGCNCKIKSCYYLPCFVTSKNECLWTDMFSNFGYPGYQSKHYACIRQKGGYCSWYRGWAPPDKSIINATDP.

An N-terminal signal peptide occupies residues 1-23; it reads MTPWLGLVVLLGSWSLGDWGAEA. C24 provides a ligand contact to Zn(2+). Involved in metalloproteinase-binding stretches follow at residues 24-27 and 88-89; these read CTCS and ES. 6 cysteine pairs are disulfide-bonded: C24–C91, C26–C118, C36–C143, C145–C192, C150–C155, and C163–C184. The region spanning 24-143 is the NTR domain; the sequence is CTCSPSHPQD…GLNYRYHLGC (120 aa). The tract at residues 105-188 is mediates interaction with EFEMP1; the sequence is TGRVYDGKMY…SKHYACIRQK (84 aa). An N-linked (GlcNAc...) asparagine glycan is attached at N207.

The protein belongs to the protease inhibitor I35 (TIMP) family. Interacts with EFEMP1. Interacts with KDR.

The protein resides in the secreted. It localises to the extracellular space. Its subcellular location is the extracellular matrix. Mediates a variety of processes including matrix regulation and turnover, inflammation, and angiogenesis, through reversible inhibition of zinc protease superfamily enzymes, primarily matrix metalloproteinases (MMPs). Regulates extracellular matrix (ECM) remodeling through inhibition of matrix metalloproteinases (MMP) including MMP-1, MMP-2, MMP-3, MMP-7, MMP-9, MMP-13, MMP-14 and MMP-15. Additionally, modulates the processing of amyloid precursor protein (APP) and apolipoprotein E receptor ApoER2 by inhibiting two alpha-secretases ADAM10 and ADAM17. Functions as a tumor suppressor and a potent inhibitor of angiogenesis. Exerts its anti-angiogenic effect by directly interacting with vascular endothelial growth factor (VEGF) receptor-2/KDR, preventing its binding to the VEGFA ligand. Selectively induces apoptosis in angiogenic endothelial cells through a caspase-independent cell death pathway. Mechanistically, inhibits matrix-induced focal adhesion kinase PTK2 tyrosine phosphorylation and association with paxillin/PXN and disrupts the incorporation of ITGB3, PTK2 and PXN into focal adhesion contacts on the matrix. The protein is Metalloproteinase inhibitor 3 (TIMP3) of Bos taurus (Bovine).